The primary structure comprises 301 residues: Glycine--tRNA ligase alpha subunit (301 aa).

It belongs to the class-II aminoacyl-tRNA synthetase family. As to quaternary structure, tetramer of two alpha and two beta subunits.

The protein localises to the cytoplasm. It catalyses the reaction tRNA(Gly) + glycine + ATP = glycyl-tRNA(Gly) + AMP + diphosphate. The protein is Glycine--tRNA ligase alpha subunit of Campylobacter hominis (strain ATCC BAA-381 / DSM 21671 / CCUG 45161 / LMG 19568 / NCTC 13146 / CH001A).